A 233-amino-acid chain; its full sequence is Biosynthetic peptidoglycan transglycosylase (233 aa).

A helical membrane pass occupies residues 8–28 (LIALPVGIFIFFNAYVYGNII).

This sequence belongs to the glycosyltransferase 51 family.

The protein localises to the cell inner membrane. It catalyses the reaction [GlcNAc-(1-&gt;4)-Mur2Ac(oyl-L-Ala-gamma-D-Glu-L-Lys-D-Ala-D-Ala)](n)-di-trans,octa-cis-undecaprenyl diphosphate + beta-D-GlcNAc-(1-&gt;4)-Mur2Ac(oyl-L-Ala-gamma-D-Glu-L-Lys-D-Ala-D-Ala)-di-trans,octa-cis-undecaprenyl diphosphate = [GlcNAc-(1-&gt;4)-Mur2Ac(oyl-L-Ala-gamma-D-Glu-L-Lys-D-Ala-D-Ala)](n+1)-di-trans,octa-cis-undecaprenyl diphosphate + di-trans,octa-cis-undecaprenyl diphosphate + H(+). It participates in cell wall biogenesis; peptidoglycan biosynthesis. Functionally, peptidoglycan polymerase that catalyzes glycan chain elongation from lipid-linked precursors. In Neisseria meningitidis serogroup A / serotype 4A (strain DSM 15465 / Z2491), this protein is Biosynthetic peptidoglycan transglycosylase.